A 53-amino-acid polypeptide reads, in one-letter code: UPF0391 membrane protein YtjA (53 aa).

A run of 2 helical transmembrane segments spans residues 4–24 (WGII…GGLA) and 30–48 (AAKI…SLFM).

It belongs to the UPF0391 family.

It is found in the cell membrane. The polypeptide is UPF0391 membrane protein YtjA (Salmonella agona (strain SL483)).